A 712-amino-acid polypeptide reads, in one-letter code: MNPIVKSFQYGQHTVTLETGVMARQATAAVMVSMDDTCVFVTVVGKKEADHGRDFFPLTVNYQERTYAAGRIPGGFFRREGRPSEGETLISRLIDRPIRPLFPEGFLNEVQVVATVMSVNPAVSPDIVAMIGASAALAISGIPFGGPIGAARVGYMNGQYVLNPTTTELPQSDLDLVVAGTANAVLMVESEAAILSEEVMLGAVVFGHEQMQAVINAINEFAADVGTKPWNWTAPAVNEALKAKVAELATAELGEAYRITEKAVRYETIGAIKARVVEQVIASGVEEDAKKIGEEFHSLESRIVRGRVVRGEPRIDGRDPEMIRALSVATGVLPRAHGSALFTRGETQAMVVATLGTERDAQNIDELTGNRADRFMLHYNFPPYCVGETGMMGSPKRREIGHGRLAKRGVAAVMPSADEFPYVVRVVSEITESNGSSSMASVCGSSLALMDAGVPIKASVAGIAMGLVKEEEGFVVLSDILGDEDHLGDMDFKVAGTTEGVTALQMDIKIEGITKEIMEIALKQARGARLHILKVMDEAIQAPRAEISDFAPRIHTIKINPEKIKDVIGKGGSVIRALTEETGTNIELDDDGTVRIAAVDGDAAKEAIRRIEAITAEIEVNRIYEGKVVRLADFGAFVNILPGKDGLVHISQITDARVQNVADYLKIGDVVKVKVLEVDRQGRVRLSIKEANAPTEAAAEPAVAAVEEPAAE.

2 residues coordinate Mg(2+): D485 and D491. Residues 552 to 615 (PRIHTIKINP…EAIRRIEAIT (64 aa)) form the KH domain. The S1 motif domain maps to 621 to 689 (NRIYEGKVVR…RQGRVRLSIK (69 aa)).

The protein belongs to the polyribonucleotide nucleotidyltransferase family. Component of the RNA degradosome, which is a multiprotein complex involved in RNA processing and mRNA degradation. The cofactor is Mg(2+).

It is found in the cytoplasm. The catalysed reaction is RNA(n+1) + phosphate = RNA(n) + a ribonucleoside 5'-diphosphate. Its function is as follows. Involved in mRNA degradation. Catalyzes the phosphorolysis of single-stranded polyribonucleotides processively in the 3'- to 5'-direction. The protein is Polyribonucleotide nucleotidyltransferase of Aeromonas hydrophila subsp. hydrophila (strain ATCC 7966 / DSM 30187 / BCRC 13018 / CCUG 14551 / JCM 1027 / KCTC 2358 / NCIMB 9240 / NCTC 8049).